The primary structure comprises 128 residues: Riboflavin kinase (128 aa).

G12–K17 is a binding site for CDP. Residues T41 and N43 each contribute to the Mg(2+) site. Residues T97 and E105 each coordinate FMN. I110–R113 provides a ligand contact to CDP.

The protein belongs to the archaeal riboflavin kinase family. Mg(2+) is required as a cofactor.

It carries out the reaction riboflavin + CTP = CDP + FMN + H(+). Its pathway is cofactor biosynthesis; FMN biosynthesis; FMN from riboflavin (CTP route): step 1/1. In terms of biological role, catalyzes the CTP-dependent phosphorylation of riboflavin (vitamin B2) to form flavin mononucleotide (FMN). This is Riboflavin kinase from Methanococcus aeolicus (strain ATCC BAA-1280 / DSM 17508 / OCM 812 / Nankai-3).